The sequence spans 997 residues: Bifunctional purine synthesis protein purC/E (997 aa).

The interval 1 to 305 (MTTAINNNIV…NNNNNNNNNS (305 aa)) is SAICAR synthetase. Low complexity-rich tracts occupy residues 294–323 (LNNNNNNNNNNSNNNNNNTSSTSRSNSLPN), 342–355 (QQQSGVGNNNNVNS), and 524–536 (TSTSTTTTTTTTS). 4 disordered regions span residues 294–355 (LNNN…NVNS), 518–538 (IPVDNPTSTSTTTTTTTTSNA), 550–569 (INSNTSSHNNNQQQQQQQQT), and 575–604 (PTIINTPTPVRSSVSRSQSPLPSGNGSSII). The tract at residues 305–997 (SNNNNNNTSS…GRKMGHVTQQ (693 aa)) is AIR carboxylase. Positions 575–597 (PTIINTPTPVRSSVSRSQSPLPS) are enriched in low complexity. ATP is bound by residues arginine 728, lysine 768, glutamine 779, 807–810 (EQYI), and glutamate 815. In terms of domain architecture, ATP-grasp spans 732–927 (KTFIQSLDIP…QFEQLIRCVC (196 aa)). Residues glutamate 880 and glutamate 898 each coordinate Mg(2+). 897–898 (NE) is an ATP binding site.

In the N-terminal section; belongs to the SAICAR synthetase family. This sequence in the C-terminal section; belongs to the AIR carboxylase family. Class I subfamily. Mg(2+) serves as cofactor. Requires Mn(2+) as cofactor.

It carries out the reaction 5-amino-1-(5-phospho-D-ribosyl)imidazole-4-carboxylate + L-aspartate + ATP = (2S)-2-[5-amino-1-(5-phospho-beta-D-ribosyl)imidazole-4-carboxamido]succinate + ADP + phosphate + 2 H(+). The enzyme catalyses 5-amino-1-(5-phospho-D-ribosyl)imidazole-4-carboxylate + H(+) = 5-amino-1-(5-phospho-beta-D-ribosyl)imidazole + CO2. It functions in the pathway purine metabolism; IMP biosynthesis via de novo pathway; 5-amino-1-(5-phospho-D-ribosyl)imidazole-4-carboxylate from 5-amino-1-(5-phospho-D-ribosyl)imidazole (carboxylase route): step 1/1. The protein operates within purine metabolism; IMP biosynthesis via de novo pathway; 5-amino-1-(5-phospho-D-ribosyl)imidazole-4-carboxamide from 5-amino-1-(5-phospho-D-ribosyl)imidazole-4-carboxylate: step 1/2. In terms of biological role, bifunctional enzyme involved in de novo IMP synthesis, an essential step for de nove purine synthesis. The protein is Bifunctional purine synthesis protein purC/E (purC/E) of Dictyostelium discoideum (Social amoeba).